The primary structure comprises 338 residues: CDP-paratose 2-epimerase (338 aa).

Threonine 124 provides a ligand contact to substrate. The Proton acceptor role is filled by tyrosine 164.

This sequence belongs to the NAD(P)-dependent epimerase/dehydratase family. In terms of assembly, homotetramer. The cofactor is NAD(+).

It carries out the reaction CDP-alpha-D-paratose = CDP-3,6-dideoxy-alpha-D-mannose. Its pathway is nucleotide-sugar biosynthesis; CDP-3,6-dideoxy-D-mannose biosynthesis; CDP-3,6-dideoxy-D-mannose from CTP and alpha-D-glucose 1-phosphate: step 5/5. Catalyzes the isomeration of CDP-paratose to CDP-tyvelose. The protein is CDP-paratose 2-epimerase (rfbE) of Salmonella typhi.